The primary structure comprises 441 residues: Anti-sigma-I factor RsgI (441 aa).

The Cytoplasmic segment spans residues 1 to 53 (MMNKGIVMDIKKHSVVVLTPNGEFITCKRKGDSCMIGEEISFDEQEQKASRFS). One can recognise a RsgI N-terminal anti-sigma domain in the interval 3-51 (NKGIVMDIKKHSVVVLTPNGEFITCKRKGDSCMIGEEISFDEQEQKASR). A helical transmembrane segment spans residues 54–76 (IPYFLKPASLLVACFLCALLFFY). The Extracellular segment spans residues 77–441 (NQPEEKVFAY…HQQGNEKKNQ (365 aa)). The interval 213–441 (ENEKNKSVTP…HQQGNEKKNQ (229 aa)) is disordered. The span at 219–230 (SVTPPATPSNPV) shows a compositional bias: polar residues. Residues 240–251 (PDSSPDVVPDLS) show a composition bias toward low complexity. Residues 252–281 (SVKDKKYEKPEYKEQKKIEEQPTKQIKENN) are compositionally biased toward basic and acidic residues. Low complexity-rich tracts occupy residues 282-328 (GRGS…QQGN), 336-358 (NNGH…QQGN), and 366-408 (NNGH…NGRG). A compositionally biased stretch (polar residues) spans 411-428 (KENVGNEQGNNGRGSQQE). The segment covering 429 to 441 (NRGHQQGNEKKNQ) has biased composition (basic and acidic residues).

As to quaternary structure, interacts (via RsgI N-terminal anti-sigma domain) with SigI.

The protein resides in the cell membrane. In terms of biological role, anti-sigma factor for SigI. Negatively regulates SigI activity through direct interaction. Has no direct effect on virulence gene expression. In Bacillus anthracis, this protein is Anti-sigma-I factor RsgI.